The primary structure comprises 264 residues: 3-methyl-2-oxobutanoate hydroxymethyltransferase (264 aa).

Mg(2+) is bound by residues D45 and D84. 3-methyl-2-oxobutanoate contacts are provided by residues 45-46 (DS), D84, and K112. Residue E114 coordinates Mg(2+). The Proton acceptor role is filled by E181.

This sequence belongs to the PanB family. As to quaternary structure, homodecamer; pentamer of dimers. Mg(2+) is required as a cofactor.

The protein localises to the cytoplasm. It carries out the reaction 3-methyl-2-oxobutanoate + (6R)-5,10-methylene-5,6,7,8-tetrahydrofolate + H2O = 2-dehydropantoate + (6S)-5,6,7,8-tetrahydrofolate. It functions in the pathway cofactor biosynthesis; (R)-pantothenate biosynthesis; (R)-pantoate from 3-methyl-2-oxobutanoate: step 1/2. Its function is as follows. Catalyzes the reversible reaction in which hydroxymethyl group from 5,10-methylenetetrahydrofolate is transferred onto alpha-ketoisovalerate to form ketopantoate. This Shewanella sp. (strain MR-7) protein is 3-methyl-2-oxobutanoate hydroxymethyltransferase.